The sequence spans 402 residues: Deoxyguanosinetriphosphate triphosphohydrolase-like protein (402 aa).

Positions 73–217 (RLTHTIEVAQ…AAIADDIAYN (145 aa)) constitute an HD domain.

This sequence belongs to the dGTPase family. Type 2 subfamily.

The protein is Deoxyguanosinetriphosphate triphosphohydrolase-like protein of Brucella suis (strain ATCC 23445 / NCTC 10510).